The chain runs to 163 residues: Nucleotide-binding protein syc0675_c (163 aa).

Belongs to the YajQ family.

Functionally, nucleotide-binding protein. The chain is Nucleotide-binding protein syc0675_c from Synechococcus sp. (strain ATCC 27144 / PCC 6301 / SAUG 1402/1) (Anacystis nidulans).